Reading from the N-terminus, the 353-residue chain is Photosystem II D2 protein (353 aa).

Threonine 2 is modified (N-acetylthreonine). A Phosphothreonine modification is found at threonine 2. A helical membrane pass occupies residues 41 to 61 (CAYFALGGWFTGTTFVTSWYT). Residue histidine 118 coordinates chlorophyll a. Residues 125–141 (GFMLRQFELARSVQLRP) traverse the membrane as a helical segment. 2 residues coordinate pheophytin a: glutamine 130 and asparagine 143. A helical transmembrane segment spans residues 153-166 (VFVSVFLIYPLGQS). Position 198 (histidine 198) interacts with chlorophyll a. Residues 208–228 (AALLCAIHGATVENTLFEDGD) traverse the membrane as a helical segment. Residues histidine 215 and phenylalanine 262 each coordinate a plastoquinone. Residue histidine 215 coordinates Fe cation. Histidine 269 contacts Fe cation. Residues 279 to 295 (GLWMSAIGVVGLALNLR) form a helical membrane-spanning segment.

Belongs to the reaction center PufL/M/PsbA/D family. In terms of assembly, PSII is composed of 1 copy each of membrane proteins PsbA, PsbB, PsbC, PsbD, PsbE, PsbF, PsbH, PsbI, PsbJ, PsbK, PsbL, PsbM, PsbT, PsbX, PsbY, PsbZ, Psb30/Ycf12, at least 3 peripheral proteins of the oxygen-evolving complex and a large number of cofactors. It forms dimeric complexes. Requires The D1/D2 heterodimer binds P680, chlorophylls that are the primary electron donor of PSII, and subsequent electron acceptors. It shares a non-heme iron and each subunit binds pheophytin, quinone, additional chlorophylls, carotenoids and lipids. There is also a Cl(-1) ion associated with D1 and D2, which is required for oxygen evolution. The PSII complex binds additional chlorophylls, carotenoids and specific lipids. as cofactor. In terms of processing, phosphorylated on threonine residue(s); phosphorylation increases with increasing light levels.

It localises to the plastid. It is found in the chloroplast thylakoid membrane. The enzyme catalyses 2 a plastoquinone + 4 hnu + 2 H2O = 2 a plastoquinol + O2. Photosystem II (PSII) is a light-driven water:plastoquinone oxidoreductase that uses light energy to abstract electrons from H(2)O, generating O(2) and a proton gradient subsequently used for ATP formation. It consists of a core antenna complex that captures photons, and an electron transfer chain that converts photonic excitation into a charge separation. The D1/D2 (PsbA/PsbD) reaction center heterodimer binds P680, the primary electron donor of PSII as well as several subsequent electron acceptors. D2 is needed for assembly of a stable PSII complex. The polypeptide is Photosystem II D2 protein (Marchantia polymorpha (Common liverwort)).